Reading from the N-terminus, the 1756-residue chain is Transposon Ty1-BR Gag-Pol polyprotein (1756 aa).

Polar residues-rich tracts occupy residues 1–10, 48–60, and 127–152; these read MESQQLSNYP, TKAN…TPAS, and QSQF…GNTF. Disordered stretches follow at residues 1–93, 126–173, and 352–421; these read MESQ…MMTQ, PQSQ…RPPP, and GSRN…SKST. Residues 153-165 show a composition bias toward low complexity; the sequence is TDSSSADSDMTST. Residues 299-401 are RNA-binding; the sequence is NNGIHINNKV…NSKSKTARAH (103 aa). The span at 402–418 shows a compositional bias: low complexity; the sequence is NVSTSNNSPSTDNDSIS. Residue serine 416 is modified to Phosphoserine. The active-site For protease activity; shared with dimeric partner is the aspartate 461. An integrase-type zinc finger-like region spans residues 583 to 640; sequence NVHTSESTRKYPYPFIHRMLAHANAQTIRYSLKNNTITYFNESDVDWSSAIDYQCPDC. The Integrase catalytic domain maps to 660 to 835; it reads NSYEPFQYLH…AGLDISTLLP (176 aa). 2 residues coordinate Mg(2+): aspartate 671 and aspartate 736. 2 disordered regions span residues 956–1088 and 1142–1173; these read SKAV…TEKR and PTEL…SNAY. Residues 960 to 969 are compositionally biased toward low complexity; that stretch reads SPTDSTPPST. Polar residues-rich tracts occupy residues 1005–1017 and 1031–1043; these read STPQ…STDS and MSQS…SYAS. Residues 1044-1053 are compositionally biased toward basic and acidic residues; the sequence is KSKDFRHSDS. Residues 1054-1082 show a composition bias toward polar residues; sequence YSDNETNHTNVPISSTGGTNNKTVPQTSE. Positions 1179–1213 match the Bipartite nuclear localization signal motif; sequence KKRSLEDNETEIKVSRDTWNTKNMRSLEPPRSKKR. A Reverse transcriptase Ty1/copia-type domain is found at 1339–1477; sequence NNYYITQLDI…DILGLEIKYQ (139 aa). Residues aspartate 1347, aspartate 1428, aspartate 1429, aspartate 1611, glutamate 1653, and aspartate 1686 each coordinate Mg(2+). Positions 1611–1753 constitute an RNase H Ty1/copia-type domain; the sequence is DASYGNQPYY…IKTFKLLTNK (143 aa).

As to quaternary structure, the capsid protein forms a homotrimer, from which the VLPs are assembled. The protease is a homodimer, whose active site consists of two apposed aspartic acid residues. Initially, virus-like particles (VLPs) are composed of the structural unprocessed proteins Gag and Gag-Pol, and also contain the host initiator methionine tRNA (tRNA(i)-Met) which serves as a primer for minus-strand DNA synthesis, and a dimer of genomic Ty RNA. Processing of the polyproteins occurs within the particle and proceeds by an ordered pathway, called maturation. First, the protease (PR) is released by autocatalytic cleavage of the Gag-Pol polyprotein yielding capsid protein p45 and a Pol-p154 precursor protein. This cleavage is a prerequisite for subsequent processing of Pol-p154 at the remaining sites to release the mature structural and catalytic proteins. Maturation takes place prior to the RT reaction and is required to produce transposition-competent VLPs.

The protein localises to the cytoplasm. The protein resides in the nucleus. The catalysed reaction is DNA(n) + a 2'-deoxyribonucleoside 5'-triphosphate = DNA(n+1) + diphosphate. It carries out the reaction Endonucleolytic cleavage to 5'-phosphomonoester.. Functionally, capsid protein (CA) is the structural component of the virus-like particle (VLP), forming the shell that encapsulates the retrotransposons dimeric RNA genome. The particles are assembled from trimer-clustered units and there are holes in the capsid shells that allow for the diffusion of macromolecules. CA also has nucleocapsid-like chaperone activity, promoting primer tRNA(i)-Met annealing to the multipartite primer-binding site (PBS), dimerization of Ty1 RNA and initiation of reverse transcription. In terms of biological role, the aspartyl protease (PR) mediates the proteolytic cleavages of the Gag and Gag-Pol polyproteins after assembly of the VLP. Its function is as follows. Reverse transcriptase/ribonuclease H (RT) is a multifunctional enzyme that catalyzes the conversion of the retro-elements RNA genome into dsDNA within the VLP. The enzyme displays a DNA polymerase activity that can copy either DNA or RNA templates, and a ribonuclease H (RNase H) activity that cleaves the RNA strand of RNA-DNA heteroduplexes during plus-strand synthesis and hydrolyzes RNA primers. The conversion leads to a linear dsDNA copy of the retrotransposon that includes long terminal repeats (LTRs) at both ends. Integrase (IN) targets the VLP to the nucleus, where a subparticle preintegration complex (PIC) containing at least integrase and the newly synthesized dsDNA copy of the retrotransposon must transit the nuclear membrane. Once in the nucleus, integrase performs the integration of the dsDNA into the host genome. The chain is Transposon Ty1-BR Gag-Pol polyprotein (TY1B-BR) from Saccharomyces cerevisiae (strain ATCC 204508 / S288c) (Baker's yeast).